The primary structure comprises 351 residues: Dihydroorotate dehydrogenase (quinone) (351 aa).

FMN-binding positions include 67–71 and Thr91; that span reads AGFDK. Lys71 is a substrate binding site. Position 116–120 (116–120) interacts with substrate; the sequence is NAMGF. FMN is bound by residues Asn145 and Asn178. Asn178 is a binding site for substrate. Ser181 (nucleophile) is an active-site residue. Asn183 is a substrate binding site. Residues Lys214 and Thr242 each contribute to the FMN site. 243-244 contacts substrate; the sequence is NT. Residues Gly262, Gly291, and 312–313 each bind FMN; that span reads YS.

This sequence belongs to the dihydroorotate dehydrogenase family. Type 2 subfamily. As to quaternary structure, monomer. FMN is required as a cofactor.

It localises to the cell membrane. The catalysed reaction is (S)-dihydroorotate + a quinone = orotate + a quinol. It participates in pyrimidine metabolism; UMP biosynthesis via de novo pathway; orotate from (S)-dihydroorotate (quinone route): step 1/1. Its function is as follows. Catalyzes the conversion of dihydroorotate to orotate with quinone as electron acceptor. This is Dihydroorotate dehydrogenase (quinone) from Helicobacter acinonychis (strain Sheeba).